Reading from the N-terminus, the 487-residue chain is Signal recognition particle subunit SRP54 (487 aa).

The G-domain stretch occupies residues methionine 1 to leucine 295. GTP is bound by residues glycine 108–threonine 115, aspartate 190–arginine 194, and threonine 248–aspartate 251. An M-domain region spans residues glycine 296 to lysine 487.

The protein belongs to the GTP-binding SRP family. SRP54 subfamily. In terms of assembly, component of a signal recognition particle (SRP) complex that consists of a 7SL RNA molecule of 300 nucleotides and six protein subunits: SRP72, SRP68, SRP54, SRP19, SRP14 and SRP9.

The protein resides in the cytoplasm. It is found in the endoplasmic reticulum. It carries out the reaction GTP + H2O = GDP + phosphate + H(+). Functionally, component of the signal recognition particle (SRP) complex, a ribonucleoprotein complex that mediates the cotranslational targeting of secretory and membrane proteins to the endoplasmic reticulum (ER). As part of the SRP complex, associates with the SRP receptor (SR) component SRPRA to target secretory proteins to the endoplasmic reticulum membrane. Binds to the signal sequence of presecretory proteins when they emerge from the ribosomes. Displays basal GTPase activity, and stimulates reciprocal GTPase activation of the SR subunit SRPRA. Forms a guanosine 5'-triphosphate (GTP)-dependent complex with the SR subunit SRPRA. SR compaction and GTPase mediated rearrangement of SR drive SRP-mediated cotranslational protein translocation into the ER. Requires the presence of SRP9/SRP14 and/or SRP19 to stably interact with RNA. The polypeptide is Signal recognition particle subunit SRP54 (Entamoeba histolytica (strain ATCC 30459 / HM-1:IMSS / ABRM)).